Reading from the N-terminus, the 342-residue chain is Glycerol-3-phosphate dehydrogenase [NAD(P)+] (342 aa).

3 residues coordinate NADPH: S13, W14, and K108. 3 residues coordinate sn-glycerol 3-phosphate: K108, G139, and S141. NADPH is bound at residue A143. 5 residues coordinate sn-glycerol 3-phosphate: K194, D247, S257, R258, and N259. K194 acts as the Proton acceptor in catalysis. Residue R258 coordinates NADPH. Residues V282 and E284 each coordinate NADPH.

Belongs to the NAD-dependent glycerol-3-phosphate dehydrogenase family.

The protein localises to the cytoplasm. It carries out the reaction sn-glycerol 3-phosphate + NAD(+) = dihydroxyacetone phosphate + NADH + H(+). The enzyme catalyses sn-glycerol 3-phosphate + NADP(+) = dihydroxyacetone phosphate + NADPH + H(+). It functions in the pathway membrane lipid metabolism; glycerophospholipid metabolism. Catalyzes the reduction of the glycolytic intermediate dihydroxyacetone phosphate (DHAP) to sn-glycerol 3-phosphate (G3P), the key precursor for phospholipid synthesis. This is Glycerol-3-phosphate dehydrogenase [NAD(P)+] from Lactococcus lactis subsp. cremoris (strain MG1363).